A 601-amino-acid chain; its full sequence is Potassium channel KAT2 (601 aa).

At 1–42 the chain is on the cytoplasmic side; it reads METISNIFHNDPLPPLGARANQSIKLRKFIISPYDSRYRTWE. Residues 43–63 traverse the membrane as a helical segment; it reads TFLLVLVVYSAWICPFELAYL. Topologically, residues 64-71 are extracellular; it reads RNLSWKVS. Residues 72–92 form a helical membrane-spanning segment; sequence LVDNIIDSFFAIDIILTFFLA. Topologically, residues 93 to 112 are cytoplasmic; sequence YLDQKSYLLVDDPKRIVARY. A helical transmembrane segment spans residues 113-133; that stretch reads FSSWFLFDVCSTIPYQLLGQI. The Extracellular segment spans residues 134 to 144; the sequence is FKKHENGLAYR. Residues 145-165 form a helical; Voltage-sensor membrane-spanning segment; it reads LLSMLRLWRLRRLSELFARLE. At 166-179 the chain is on the cytoplasmic side; that stretch reads KDIRLNYYWIRCTK. Residues 180-200 form a helical membrane-spanning segment; it reads LISVTLFAVHCSGCFNYLIAD. Over 201–227 the chain is Extracellular; the sequence is RYPNPARTWIGAAIPNYRSQNLWVRYV. Positions 228-247 form an intramembrane region, pore-forming; the sequence is TAIYWSITTLTTTGYGDLHA. Over 248–251 the chain is Extracellular; the sequence is ENQR. The helical transmembrane segment at 252–272 threads the bilayer; that stretch reads EMLFSICYMLFNLGLTAYLIG. Over 273–601 the chain is Cytoplasmic; it reads NMTNLVVQGS…DGDHLFFMEI (329 aa). An a nucleoside 3',5'-cyclic phosphate-binding site is contributed by 356–475; it reads LFHGVSFTCM…RVILNNLSQK (120 aa). The KHA domain maps to 530-601; sequence RVTIHMYSQR…DGDHLFFMEI (72 aa).

This sequence belongs to the potassium channel family. Plant (TC 1.A.1.4) subfamily.

The protein resides in the membrane. In terms of biological role, probable inward-rectifying potassium channel. Assuming opened or closed conformations in response to the voltage difference across the membrane, the channel is activated by hyperpolarization. The protein is Potassium channel KAT2 of Oryza sativa subsp. japonica (Rice).